The primary structure comprises 684 residues: MRNVVHRGGEFKLESPYGPTGDQPSAIKALTDGVLRGDRWQTLLGVTGSGKTFTVSNVIAQVNRPTLVLSHNKTLAAQLYGELKQFFPHNAVEYFISYYDFYQPEAYIPSLDKYIAKDLKINDEIERLRLRATSALLSGRNDVIVVSSVSCIYGLGSPEDWMAQIVELRQGMELDRDEFLQRLVALHYFRDDVDLSPGRFRVRGDVIDLVPGHEELALRIEFFGSEIDSIHTFDPKSGEIIGRDEYAFIYPARQFVADSEKLEVAMLAIENELAERLNALRAEEKLVEAQRLEERTRYDLEMMKELGYCSGIENYARHIAGRKPGERPWCLLDYFPEDFLVVVDESHVTLPQIRGMYGGDRSRKTVLVEHGFRLPSALDNRPLRFEEFEEMVPQVICVSATPSAHELMRSGGVVVEQLIRPTGLLDPQIEVHPVAGQIDHLLARIRERIAKGQKSLVLTLTKRMSEDLHAYFRKLGLRSQYLHSEIKSLERMQILRELRAGDIEVLVGVNLLREGLDLPEVALVAILDADKEGFLRDATSLMQIAGRAARNVEGLVLFYADKITDSMREVLDETERRRRIQREYNEKHGIEPRSIIKSVDQVLNTTSVADAEERYRRKRLGLQKRPELELRGVLDSMSRSDVMLMVAEMNAEMQKAAEQTDYEKAAYLRDEILMLQERIEQMTE.

The region spanning 32–420 (DGVLRGDRWQ…GGVVVEQLIR (389 aa)) is the Helicase ATP-binding domain. ATP is bound at residue 45–52 (GVTGSGKT). Positions 98-121 (YYDFYQPEAYIPSLDKYIAKDLKI) match the Beta-hairpin motif. The Helicase C-terminal domain maps to 437 to 603 (QIDHLLARIR…SIIKSVDQVL (167 aa)). The UVR domain maps to 643 to 678 (MLMVAEMNAEMQKAAEQTDYEKAAYLRDEILMLQER).

Belongs to the UvrB family. As to quaternary structure, forms a heterotetramer with UvrA during the search for lesions. Interacts with UvrC in an incision complex.

It is found in the cytoplasm. Functionally, the UvrABC repair system catalyzes the recognition and processing of DNA lesions. A damage recognition complex composed of 2 UvrA and 2 UvrB subunits scans DNA for abnormalities. Upon binding of the UvrA(2)B(2) complex to a putative damaged site, the DNA wraps around one UvrB monomer. DNA wrap is dependent on ATP binding by UvrB and probably causes local melting of the DNA helix, facilitating insertion of UvrB beta-hairpin between the DNA strands. Then UvrB probes one DNA strand for the presence of a lesion. If a lesion is found the UvrA subunits dissociate and the UvrB-DNA preincision complex is formed. This complex is subsequently bound by UvrC and the second UvrB is released. If no lesion is found, the DNA wraps around the other UvrB subunit that will check the other stand for damage. This is UvrABC system protein B from Chlorobaculum tepidum (strain ATCC 49652 / DSM 12025 / NBRC 103806 / TLS) (Chlorobium tepidum).